Here is a 305-residue protein sequence, read N- to C-terminus: Oxidoreductase OpS7 (305 aa).

This sequence belongs to the oxidoreductase OpS7 family.

It functions in the pathway secondary metabolite biosynthesis. Functionally, oxidoreductase; part of the gene cluster that mediates the biosynthesis of the bibenzoquinone oosporein, a metabolite required for fungal virulence that acts by evading host immunity to facilitate fungal multiplication in insects. The non-reducing polyketide synthase OpS1 produces orsellinic acid by condensing acetyl-CoA with 3 malonyl-CoA units. Orsellinic acid is then hydroxylated to benzenetriol by the hydroxylase OpS4. The intermediate is oxidized either nonenzymatically to 5,5'-dideoxy-oosporein or enzymatically to benzenetetrol by the oxidoreductase OpS7. The latter is further dimerized to oosporein by the catalase OpS5. OpS6 probably functions en route for protecting cells against oxidative stress by scavenging any leaked free radical form of benzenetetrol by activating the thiol group of glutathione. This Beauveria bassiana (strain ARSEF 2860) (White muscardine disease fungus) protein is Oxidoreductase OpS7.